Consider the following 98-residue polypeptide: Beta-elicitin DRE-beta (98 aa).

3 cysteine pairs are disulfide-bonded: Cys-3–Cys-71, Cys-27–Cys-56, and Cys-51–Cys-95.

It belongs to the elicitin family.

Its subcellular location is the secreted. Its function is as follows. Induces local and distal defense responses (incompatible hypersensitive reaction) in plants from the solanaceae and cruciferae families. Elicits leaf necrosis and causes the accumulation of pathogenesis-related proteins. Might interact with the lipidic molecules of the plasma membrane. This chain is Beta-elicitin DRE-beta, found in Phytophthora drechsleri.